The sequence spans 457 residues: uncharacterized protein (457 aa).

The region spanning 5-63 (PVEEGQKFPLTIRRMGINGEGIGYFKKAVVFVPGAITGEEVVVEAVKVRDRFTEAKLNK) is the TRAM domain. Residues Cys76, Cys82, Cys85, and Cys166 each contribute to the [4Fe-4S] cluster site. Positions 290, 319, 340, and 388 each coordinate S-adenosyl-L-methionine. The active-site Nucleophile is Cys415.

The protein belongs to the class I-like SAM-binding methyltransferase superfamily. RNA M5U methyltransferase family.

This is an uncharacterized protein from Listeria innocua serovar 6a (strain ATCC BAA-680 / CLIP 11262).